A 501-amino-acid chain; its full sequence is Glycerol kinase (501 aa).

T17 contributes to the ADP binding site. ATP-binding residues include T17, T18, and S19. Position 17 (T17) interacts with sn-glycerol 3-phosphate. R21 lines the ADP pocket. Residues R87, E88, Y139, and D243 each contribute to the sn-glycerol 3-phosphate site. Positions 87, 88, 139, 243, and 244 each coordinate glycerol. Residues T265 and G308 each contribute to the ADP site. ATP-binding residues include T265, G308, Q312, and G409. Residues G409 and N413 each coordinate ADP.

The protein belongs to the FGGY kinase family.

It catalyses the reaction glycerol + ATP = sn-glycerol 3-phosphate + ADP + H(+). It functions in the pathway polyol metabolism; glycerol degradation via glycerol kinase pathway; sn-glycerol 3-phosphate from glycerol: step 1/1. With respect to regulation, inhibited by fructose 1,6-bisphosphate (FBP). Its function is as follows. Key enzyme in the regulation of glycerol uptake and metabolism. Catalyzes the phosphorylation of glycerol to yield sn-glycerol 3-phosphate. The sequence is that of Glycerol kinase from Pseudomonas fluorescens (strain SBW25).